The primary structure comprises 103 residues: Ghrelin (103 aa).

An N-terminal signal peptide occupies residues 1 to 26 (MPLRRRASHMFVLLCALSLCVESVKG). Positions 27–51 (GTSFLSPAQKPQGRRPPRMGRRDVA) are disordered. The O-decanoyl serine; alternate moiety is linked to residue S29. The O-hexanoyl serine; alternate moiety is linked to residue S29. S29 carries the O-octanoyl serine; alternate lipid modification. Residue Q38 is modified to Glutamine amide. M45 bears the Methionine amide mark. Residues 49–103 (DVAEPEIPVIKEDDQFMMSAPFELSVSLSEAEYEKYGPVLQKVLVNLLGDSPLEF) constitute a propeptide, removed in mature form.

It belongs to the motilin family. O-octanoylated by GOAT/MBOAT4. O-octanoylation or O-decanoylation is essential for activity. The O-decanoylated form differs in the length of the carbon backbone of the carboxylic acid forming an ester bond with Ser-29. Expressed in the telencephalon, hypothalamus, pituitary, intestine, liver, spleen and gill, with expression strongest in the intestine.

It is found in the secreted. Ligand for growth hormone secretagogue receptor type 1 (GHSR). Induces the release of growth hormone from the pituitary. Induces adiposity and stimulates gastric acid secretion. Involved in growth regulation. Has an appetite-stimulating effect. This chain is Ghrelin (ghrl), found in Carassius auratus (Goldfish).